A 162-amino-acid polypeptide reads, in one-letter code: MMKPKRLLSLLLRLIAVGATLAAVIIMATSHEKGTFFAVSYEAKYTDTPAFKYFVIANAIVTVYGFLVLFHPPGSPLWRLVLALDLVFTMLLISSISAALAVAQVGKNGNSRAGWLPVCGQVTKYCNQVTGALVAGLIALITYIILLLHSIYTFLNPLLEKA.

At 1–6 (MMKPKR) the chain is on the cytoplasmic side. The helical transmembrane segment at 7 to 27 (LLSLLLRLIAVGATLAAVIIM) threads the bilayer. Topologically, residues 28-49 (ATSHEKGTFFAVSYEAKYTDTP) are extracellular. The chain crosses the membrane as a helical span at residues 50–70 (AFKYFVIANAIVTVYGFLVLF). Residues 71-79 (HPPGSPLWR) are Cytoplasmic-facing. The helical transmembrane segment at 80–100 (LVLALDLVFTMLLISSISAAL) threads the bilayer. Over 101 to 130 (AVAQVGKNGNSRAGWLPVCGQVTKYCNQVT) the chain is Extracellular. A helical membrane pass occupies residues 131–151 (GALVAGLIALITYIILLLHSI). Over 152–162 (YTFLNPLLEKA) the chain is Cytoplasmic.

This sequence belongs to the Casparian strip membrane proteins (CASP) family. In terms of assembly, homodimer and heterodimers.

The protein resides in the cell membrane. In Populus trichocarpa (Western balsam poplar), this protein is CASP-like protein 1C2.